We begin with the raw amino-acid sequence, 145 residues long: MKLTLAVVVVFAYIATTNAINPAILAAMTGGGGGNFKQMLLMDALFKNQNIGGGGGGGGGVLGGGQSQFAKMIMTKMLLKQFGENPLAAMTLMGNQNIDPMTLIALSGGENMQAIIPIIMRQQMQQQMRSQMPPVGALGTQMTPM.

The N-terminal stretch at 1–19 (MKLTLAVVVVFAYIATTNA) is a signal peptide.

As to expression, component of the acid-insoluble and acid-soluble organic matrix of calcified layers of the shell (at protein level).

The protein localises to the secreted. The sequence is that of Glycine-rich protein from Lottia gigantea (Giant owl limpet).